The following is a 179-amino-acid chain: Large ribosomal subunit protein uL6 (179 aa).

It belongs to the universal ribosomal protein uL6 family. As to quaternary structure, part of the 50S ribosomal subunit.

In terms of biological role, this protein binds to the 23S rRNA, and is important in its secondary structure. It is located near the subunit interface in the base of the L7/L12 stalk, and near the tRNA binding site of the peptidyltransferase center. This chain is Large ribosomal subunit protein uL6, found in Alkaliphilus oremlandii (strain OhILAs) (Clostridium oremlandii (strain OhILAs)).